The primary structure comprises 111 residues: Cytochrome c (111 aa).

At alanine 1 the chain carries N-acetylalanine. Heme c is bound by residues cysteine 22, cysteine 25, and histidine 26. Lysine 80 carries the post-translational modification N6,N6,N6-trimethyllysine. Methionine 88 serves as a coordination point for heme c. Lysine 94 bears the N6,N6,N6-trimethyllysine mark.

It belongs to the cytochrome c family. Binds 1 heme c group covalently per subunit.

Its subcellular location is the mitochondrion intermembrane space. Its function is as follows. Electron carrier protein. The oxidized form of the cytochrome c heme group can accept an electron from the heme group of the cytochrome c1 subunit of cytochrome reductase. Cytochrome c then transfers this electron to the cytochrome oxidase complex, the final protein carrier in the mitochondrial electron-transport chain. The sequence is that of Cytochrome c from Sesamum indicum (Oriental sesame).